Consider the following 547-residue polypeptide: Phenylalanine--tRNA ligase beta subunit (547 aa).

The 76-residue stretch at 269 to 344 (LDVRFMEVDV…IGYGYENITP (76 aa)) folds into the B5 domain. 4 residues coordinate Mg(2+): aspartate 322, aspartate 328, glutamate 331, and aspartate 332.

The protein belongs to the phenylalanyl-tRNA synthetase beta subunit family. Type 2 subfamily. In terms of assembly, tetramer of two alpha and two beta subunits. Requires Mg(2+) as cofactor.

It is found in the cytoplasm. It carries out the reaction tRNA(Phe) + L-phenylalanine + ATP = L-phenylalanyl-tRNA(Phe) + AMP + diphosphate + H(+). In Archaeoglobus fulgidus (strain ATCC 49558 / DSM 4304 / JCM 9628 / NBRC 100126 / VC-16), this protein is Phenylalanine--tRNA ligase beta subunit.